The primary structure comprises 423 residues: Mannan endo-1,4-beta-mannosidase (423 aa).

The first 27 residues, 1–27 (MKTITTARLPWAAQSFALGICLIALLG), serve as a signal peptide directing secretion. The region spanning 56 to 409 (METRSLFAFM…YADEFTAFNR (354 aa)) is the GH26 domain. Residues glutamate 121, histidine 143, and tryptophan 162 each contribute to the substrate site. The active-site Proton donor is glutamate 212. Residues tryptophan 217 and tyrosine 285 each contribute to the substrate site. The Nucleophile role is filled by glutamate 320. Substrate contacts are provided by residues 360–361 (WR) and histidine 377.

The protein belongs to the glycosyl hydrolase 26 family. As to quaternary structure, homodimer.

The enzyme catalyses Random hydrolysis of (1-&gt;4)-beta-D-mannosidic linkages in mannans, galactomannans and glucomannans.. Its function is as follows. Catalyzes the endo hydrolysis of beta-1,4-linked mannan and galactomannan, but displays little activity towards other polysaccharides located in the plant cell wall. Preferentially hydrolyzes the larger oligosaccharides and has greater activity against non-substituted polysaccharides. It displays tight specificity for mannose at both the -2 and the -1 subsites. Appears to act in synergy with alpha-galactosidase (AgaA) to elicit hydrolysis of galactomannan. The chain is Mannan endo-1,4-beta-mannosidase from Cellvibrio japonicus (strain Ueda107) (Pseudomonas fluorescens subsp. cellulosa).